The primary structure comprises 328 residues: Tetraacyldisaccharide 4'-kinase (328 aa).

55-62 contributes to the ATP binding site; it reads TAGGNGKT.

It belongs to the LpxK family.

The enzyme catalyses a lipid A disaccharide + ATP = a lipid IVA + ADP + H(+). It participates in glycolipid biosynthesis; lipid IV(A) biosynthesis; lipid IV(A) from (3R)-3-hydroxytetradecanoyl-[acyl-carrier-protein] and UDP-N-acetyl-alpha-D-glucosamine: step 6/6. Functionally, transfers the gamma-phosphate of ATP to the 4'-position of a tetraacyldisaccharide 1-phosphate intermediate (termed DS-1-P) to form tetraacyldisaccharide 1,4'-bis-phosphate (lipid IVA). This is Tetraacyldisaccharide 4'-kinase from Escherichia coli O7:K1 (strain IAI39 / ExPEC).